Reading from the N-terminus, the 88-residue chain is Putative transposase InsN for insertion sequence element IS911B (88 aa).

This sequence belongs to the transposase 8 family.

Its function is as follows. Involved in the transposition of the insertion sequence IS911. This chain is Putative transposase InsN for insertion sequence element IS911B (insN2), found in Escherichia coli (strain K12).